Reading from the N-terminus, the 301-residue chain is Indole-3-glycerol phosphate synthase (301 aa).

The protein belongs to the TrpC family.

The catalysed reaction is 1-(2-carboxyphenylamino)-1-deoxy-D-ribulose 5-phosphate + H(+) = (1S,2R)-1-C-(indol-3-yl)glycerol 3-phosphate + CO2 + H2O. It participates in amino-acid biosynthesis; L-tryptophan biosynthesis; L-tryptophan from chorismate: step 4/5. This is Indole-3-glycerol phosphate synthase from Prochlorococcus marinus (strain MIT 9313).